The sequence spans 602 residues: Laccase 1 (602 aa).

An N-terminal signal peptide occupies residues 1–20; sequence MDHFARVSLVAALLYTNTWA. 2 Plastocyanin-like domains span residues 30–128 and 157–345; these read TWEE…VRPK and YLVV…RIPN. Cu cation is bound by residues histidine 78, histidine 80, histidine 108, and histidine 110. N-linked (GlcNAc...) asparagine glycosylation is found at asparagine 176, asparagine 241, asparagine 264, asparagine 388, asparagine 430, asparagine 454, and asparagine 470. The Plastocyanin-like 3 domain occupies 461–584; it reads NEGLLLRTRN…GGMGMVIMDG (124 aa). 3 residues coordinate Cu cation: histidine 492, histidine 495, and histidine 497. N-linked (GlcNAc...) asparagine glycosylation is present at asparagine 512. Residues histidine 566, cysteine 567, histidine 568, and histidine 572 each coordinate Cu cation.

Belongs to the multicopper oxidase family. The cofactor is Cu cation.

It localises to the cell surface. It functions in the pathway pigment biosynthesis. Laccase; part of the Pks1 gene cluster that mediates the biosynthesis of an anthraquinone derivative pigment that contributes to conidial pigmentation that provides protection from UV radiation, heat and cold stress. The polyketide synthase Pks1 produces 1-acetyl-2,4,6,8-tetrahydroxy-9,10-anthraquinone though condensation of acetyl-CoA with malonyl-CoA. The dehydratase EthD and the laccase Mlac1 further convert the anthraquinone derivative into the final conidial pigment. This Metarhizium album (strain ARSEF 1941) protein is Laccase 1.